A 352-amino-acid chain; its full sequence is Inner membrane protein YeeA (352 aa).

Topologically, residues 1–25 (MRADKSLSPFEIRVYRHYRIVHGTR) are cytoplasmic. Transmembrane regions (helical) follow at residues 26-46 (VALAFLLTFLIIRLFTIPEST) and 47-67 (WPLVTMVVIMGPISFWGNVVP). Arginine 68 is a topological domain (cytoplasmic). The helical transmembrane segment at 69 to 89 (AFERIGGTVLGSILGLIALQL) threads the bilayer. Glutamate 90 is a topological domain (periplasmic). The chain crosses the membrane as a helical span at residues 91 to 111 (LISLPLMLVWCAAAMFLCGWL). The Cytoplasmic segment spans residues 112 to 117 (ALGKKP). Residues 118–138 (YQGLLIGVTLAIVVGSPTGEI) traverse the membrane as a helical segment. Residues 139-147 (DTALWRSGD) lie on the Periplasmic side of the membrane. The helical transmembrane segment at 148-168 (VILGSLLAMLFTGIWPQRAFI) threads the bilayer. Residues 169–352 (HWRIQLAKSL…SNLICRALRK (184 aa)) are Cytoplasmic-facing.

The protein resides in the cell inner membrane. The polypeptide is Inner membrane protein YeeA (yeeA) (Escherichia coli (strain K12)).